Here is a 149-residue protein sequence, read N- to C-terminus: 1,4-dihydroxy-2-naphthoyl-CoA hydrolase (149 aa).

Residue D19 is part of the active site.

It belongs to the 4-hydroxybenzoyl-CoA thioesterase family. DHNA-CoA hydrolase subfamily.

It catalyses the reaction 1,4-dihydroxy-2-naphthoyl-CoA + H2O = 1,4-dihydroxy-2-naphthoate + CoA + H(+). It functions in the pathway cofactor biosynthesis; phylloquinone biosynthesis. The protein operates within quinol/quinone metabolism; 1,4-dihydroxy-2-naphthoate biosynthesis; 1,4-dihydroxy-2-naphthoate from chorismate: step 7/7. Its function is as follows. Catalyzes the hydrolysis of 1,4-dihydroxy-2-naphthoyl-CoA (DHNA-CoA) to 1,4-dihydroxy-2-naphthoate (DHNA), a reaction involved in phylloquinone (vitamin K1) biosynthesis. This Synechococcus sp. (strain CC9902) protein is 1,4-dihydroxy-2-naphthoyl-CoA hydrolase.